Reading from the N-terminus, the 112-residue chain is Large ribosomal subunit protein bL17 (112 aa).

The protein belongs to the bacterial ribosomal protein bL17 family. As to quaternary structure, part of the 50S ribosomal subunit. Contacts protein L32.

The protein is Large ribosomal subunit protein bL17 of Thermoanaerobacter pseudethanolicus (strain ATCC 33223 / 39E) (Clostridium thermohydrosulfuricum).